Here is a 181-residue protein sequence, read N- to C-terminus: UPF0397 protein str0306 (181 aa).

5 consecutive transmembrane segments (helical) span residues A11–F31, L45–L65, G72–F92, I109–I129, and F147–I167.

This sequence belongs to the UPF0397 family.

The protein resides in the cell membrane. This chain is UPF0397 protein str0306, found in Streptococcus thermophilus (strain CNRZ 1066).